Reading from the N-terminus, the 474-residue chain is tRNA-2-methylthio-N(6)-dimethylallyladenosine synthase (474 aa).

One can recognise an MTTase N-terminal domain in the interval 3 to 120; sequence KKLHIKTWGC…LPDMIEQVRR (118 aa). 6 residues coordinate [4Fe-4S] cluster: C12, C49, C83, C157, C161, and C164. Positions 143-375 constitute a Radical SAM core domain; sequence RAEGPTAFVS…QDRITQQAMR (233 aa). Positions 378–441 constitute a TRAM domain; it reads RHMMGTVQRI…TNSLRGKFIR (64 aa).

Belongs to the methylthiotransferase family. MiaB subfamily. As to quaternary structure, monomer. It depends on [4Fe-4S] cluster as a cofactor.

Its subcellular location is the cytoplasm. The catalysed reaction is N(6)-dimethylallyladenosine(37) in tRNA + (sulfur carrier)-SH + AH2 + 2 S-adenosyl-L-methionine = 2-methylsulfanyl-N(6)-dimethylallyladenosine(37) in tRNA + (sulfur carrier)-H + 5'-deoxyadenosine + L-methionine + A + S-adenosyl-L-homocysteine + 2 H(+). Its function is as follows. Catalyzes the methylthiolation of N6-(dimethylallyl)adenosine (i(6)A), leading to the formation of 2-methylthio-N6-(dimethylallyl)adenosine (ms(2)i(6)A) at position 37 in tRNAs that read codons beginning with uridine. This is tRNA-2-methylthio-N(6)-dimethylallyladenosine synthase from Shewanella sp. (strain MR-7).